Consider the following 149-residue polypeptide: Large ribosomal subunit protein bL9 (149 aa).

This sequence belongs to the bacterial ribosomal protein bL9 family.

Its function is as follows. Binds to the 23S rRNA. This is Large ribosomal subunit protein bL9 from Mycoplasma pneumoniae (strain ATCC 29342 / M129 / Subtype 1) (Mycoplasmoides pneumoniae).